The following is a 317-amino-acid chain: Putative 12-oxophytodienoate reductase 10 (317 aa).

Residue 26-28 (PVG) coordinates FMN. 117 to 120 (HGAN) contributes to the substrate binding site. Y122 acts as the Proton donor in catalysis. R169 provides a ligand contact to FMN. R209 is a binding site for substrate. FMN contacts are provided by residues G244 and 265-266 (GR).

It belongs to the NADH:flavin oxidoreductase/NADH oxidase family. The cofactor is FMN.

Functionally, putative oxophytodienoate reductase that may be involved in the biosynthesis or metabolism of oxylipin signaling molecules. In Oryza sativa subsp. japonica (Rice), this protein is Putative 12-oxophytodienoate reductase 10 (OPR10).